The sequence spans 462 residues: Sugar transporter ERD6-like 2 (462 aa).

Helical transmembrane passes span 23–43 (SGLL…GCAM), 70–90 (VMTL…ALVG), 96–116 (WISD…HDII), 123–143 (LFLG…IAEI), 156–176 (NQLL…FFHW), 178–198 (TLAL…FFIP), 261–281 (LIIG…AISA), 296–316 (IGTT…MLTV), 324–344 (LLMI…LSYY), 357–377 (VMLI…LGGL), 397–417 (LVTM…NFMI), and 423–443 (GTYF…WTLV).

It belongs to the major facilitator superfamily. Sugar transporter (TC 2.A.1.1) family.

Its subcellular location is the membrane. Its function is as follows. Sugar transporter. This Arabidopsis thaliana (Mouse-ear cress) protein is Sugar transporter ERD6-like 2 (SUGTL3).